The chain runs to 95 residues: NADH-quinone oxidoreductase subunit K (95 aa).

Helical transmembrane passes span 1–21, 25–45, and 59–79; these read MSYL…VLTR, ILVF…LVGF, and MVIA…VAIF.

It belongs to the complex I subunit 4L family. In terms of assembly, NDH-1 is composed of 15 different subunits. Subunits NuoA, H, J, K, L, M, N constitute the membrane sector of the complex.

It localises to the cell inner membrane. The catalysed reaction is a quinone + NADH + 5 H(+)(in) = a quinol + NAD(+) + 4 H(+)(out). Functionally, NDH-1 shuttles electrons from NADH, via FMN and iron-sulfur (Fe-S) centers, to quinones in the respiratory chain. The immediate electron acceptor for the enzyme in this species is believed to be a menaquinone. Couples the redox reaction to proton translocation (for every two electrons transferred, four hydrogen ions are translocated across the cytoplasmic membrane), and thus conserves the redox energy in a proton gradient. This chain is NADH-quinone oxidoreductase subunit K, found in Thermus thermophilus (strain ATCC BAA-163 / DSM 7039 / HB27).